The following is a 74-amino-acid chain: Large ribosomal subunit protein uL30 (74 aa).

It belongs to the universal ribosomal protein uL30 family. As to quaternary structure, part of the 50S ribosomal subunit.

This chain is Large ribosomal subunit protein uL30, found in Micrococcus luteus (strain ATCC 4698 / DSM 20030 / JCM 1464 / CCM 169 / CCUG 5858 / IAM 1056 / NBRC 3333 / NCIMB 9278 / NCTC 2665 / VKM Ac-2230) (Micrococcus lysodeikticus).